A 405-amino-acid chain; its full sequence is Eukaryotic initiation factor 4A (405 aa).

The Q motif motif lies at 32 to 60 (PTFESMGLREELLRGIFNYGFEKPSAIQQ). The region spanning 63–233 (ILPIIKGRDT…EKFMTKPVRI (171 aa)) is the Helicase ATP-binding domain. An ATP-binding site is contributed by 76-83 (AQSGTGKT). A DEAD box motif is present at residues 181–184 (DEAD). The region spanning 244-405 (GIKQFFVSVE…EMPVNFASII (162 aa)) is the Helicase C-terminal domain.

The protein belongs to the DEAD box helicase family. eIF4A subfamily.

Its subcellular location is the cytoplasm. It catalyses the reaction ATP + H2O = ADP + phosphate + H(+). Its function is as follows. ATP-dependent RNA helicase which is a subunit of the eIF4F complex involved in cap recognition and is required for mRNA binding to ribosome. In the current model of translation initiation, eIF4A unwinds RNA secondary structures in the 5'-UTR of mRNAs which is necessary to allow efficient binding of the small ribosomal subunit, and subsequent scanning for the initiator codon. In Dictyostelium discoideum (Social amoeba), this protein is Eukaryotic initiation factor 4A (tifA).